Here is a 780-residue protein sequence, read N- to C-terminus: Striatin (780 aa).

The stretch at 53–120 (LHFLQHEWAR…QERAKYHKLK (68 aa)) forms a coiled coil. The interval 55–63 (FLQHEWARF) is caveolin-binding. Residues 124–145 (ELNQGDMKPPSYDSDEGNETEV) form a disordered region. Ser-137 carries the post-translational modification Phosphoserine. The calmodulin-binding stretch occupies residues 149-166 (QNSQFMWKQGRQLLRQYL). Phosphothreonine is present on Thr-225. A phosphoserine mark is found at Ser-227, Ser-229, Ser-245, and Ser-259. 3 disordered regions span residues 290 to 321 (FLVA…TPER), 334 to 353 (EQYK…NRSK), and 363 to 388 (DVDE…LPEQ). Residues 299–315 (NESRSAGDGTDWEKEDQ) are compositionally biased toward basic and acidic residues. Positions 338-351 (KERKGKKGVKRPNR) are enriched in basic residues. WD repeat units lie at residues 461 to 500 (SHFD…PAKK), 514 to 553 (AHKG…VDPY), 567 to 606 (GHTD…PALT), 662 to 701 (SSSC…LIHS), 704 to 743 (AHLE…CIQE), and 750 to 780 (KFEE…KVFV).

This sequence belongs to the WD repeat striatin family. In terms of assembly, part of the core of STRIPAK complexes composed of PP2A catalytic and scaffolding subunits, the striatins (PP2A regulatory subunits), the striatin-associated proteins MOB4, STRIP1 and STRIP2, PDCD10 and members of the STE20 kinases, such as STK24 and STK26. Interacts with CTTNBP2; this interaction may regulate dendritic spine distribution of STRN. Activation of glutamate receptors weakens the interaction with CTTNBP2. As to expression, mainly expressed in the central nervous system. Mostly confined in dendrites, not in axons, and is most abundant in dendritic spines.

Its subcellular location is the cytoplasm. The protein localises to the membrane. It is found in the cell projection. It localises to the dendritic spine. Calmodulin-binding scaffolding protein which is the center of the striatin-interacting phosphatase and kinase (STRIPAK) complexes. STRIPAK complexes have critical roles in protein (de)phosphorylation and are regulators of multiple signaling pathways including Hippo, MAPK, nuclear receptor and cytoskeleton remodeling. Different types of STRIPAK complexes are involved in a variety of biological processes such as cell growth, differentiation, apoptosis, metabolism and immune regulation. The protein is Striatin (Strn) of Rattus norvegicus (Rat).